The primary structure comprises 208 residues: Uracil phosphoribosyltransferase (208 aa).

5-phospho-alpha-D-ribose 1-diphosphate-binding positions include R77, R102, and 128-136 (DPMLATGGT). Residues I191 and 196 to 198 (GDI) each bind uracil. D197 is a binding site for 5-phospho-alpha-D-ribose 1-diphosphate.

Belongs to the UPRTase family. Requires Mg(2+) as cofactor.

It catalyses the reaction UMP + diphosphate = 5-phospho-alpha-D-ribose 1-diphosphate + uracil. It functions in the pathway pyrimidine metabolism; UMP biosynthesis via salvage pathway; UMP from uracil: step 1/1. Allosterically activated by GTP. Functionally, catalyzes the conversion of uracil and 5-phospho-alpha-D-ribose 1-diphosphate (PRPP) to UMP and diphosphate. This is Uracil phosphoribosyltransferase from Aquifex aeolicus (strain VF5).